Reading from the N-terminus, the 296-residue chain is Enoyl-CoA hydratase AFT3-1 (296 aa).

Residues 294 to 296 (PKL) carry the Peroxisomal targeting signal type 1 motif.

The protein belongs to the enoyl-CoA hydratase/isomerase family.

It localises to the peroxisome. The catalysed reaction is a (3S)-3-hydroxyacyl-CoA = a (2E)-enoyl-CoA + H2O. It catalyses the reaction a 4-saturated-(3S)-3-hydroxyacyl-CoA = a (3E)-enoyl-CoA + H2O. The protein operates within mycotoxin biosynthesis. In terms of biological role, enoyl-CoA hydratase; part of the gene clusters that mediate the biosynthesis of the host-selective toxins (HSTs) AF-toxins responsible for Alternaria black spot of strawberry disease by the strawberry pathotype. AF-toxin I and III are valine derivatives of 2,3-dyhydroxy-isovaleric acid and 2-hydroxy-isovaleric acid respectively, while AF II is an isoleucine derivative of 2-hydroxy-valeric acid. These derivatives are bound to a 9,10-epoxy-8-hydroxy-9-methyl-decatrienoic acid (EDA) moiety. On cellular level, AF-toxins affect plasma membrane of susceptible cells and cause a sudden increase in loss of K(+) after a few minutes of toxin treatment. The aldo-keto reductase AFTS1 catalyzes the conversion of 2-keto-isovaleric acid (2-KIV) to 2-hydroxy-isovaleric acid (2-HIV) by reduction of its ketone to an alcohol. The acyl-CoA ligase AFT1, the hydrolase AFT2 and the enoyl-CoA hydratases AFT3 and AFT6, but also the polyketide synthase AFT9, the acyl-CoA dehydrogenase AFT10, the cytochrome P450 monooxygenase AFT11 and the oxidoreductase AFT12 are all involved in the biosynthesis of the AK-, AF- and ACT-toxin common EDA structural moiety. The exact function of each enzyme, and of additional enzymes identified within the AF-toxin clusters have still to be determined. This chain is Enoyl-CoA hydratase AFT3-1 (AFT3-1), found in Alternaria alternata (Alternaria rot fungus).